We begin with the raw amino-acid sequence, 143 residues long: Period circadian protein (143 aa).

The interval 25–130 (NSKPVTAPTQ…GPSLAADNSI (106 aa)) is disordered. Low complexity-rich tracts occupy residues 71 to 93 (SGNC…ITGT) and 114 to 126 (GGAA…SLAA).

Forms a heterodimer with timeless (TIM); the complex then translocates into the nucleus. Phosphorylated with a circadian rhythmicity, probably by the double-time protein (dbt). Phosphorylation could be implicated in the stability of per monomer and in the formation of heterodimer per-tim.

The protein localises to the nucleus. It localises to the cytoplasm. The protein resides in the perinuclear region. Essential for biological clock functions. Determines the period length of circadian and ultradian rhythms; an increase in PER dosage leads to shortened circadian rhythms and a decrease leads to lengthened circadian rhythms. Essential for the circadian rhythmicity of locomotor activity, eclosion behavior, and for the rhythmic component of the male courtship song that originates in the thoracic nervous system. The biological cycle depends on the rhythmic formation and nuclear localization of the TIM-PER complex. Light induces the degradation of TIM, which promotes elimination of PER. Nuclear activity of the heterodimer coordinatively regulates PER and TIM transcription through a negative feedback loop. Behaves as a negative element in circadian transcriptional loop. Does not appear to bind DNA, suggesting indirect transcriptional inhibition. This is Period circadian protein (per) from Drosophila picticornis (Fruit fly).